Here is a 372-residue protein sequence, read N- to C-terminus: Dual-specificity RNA methyltransferase RlmN (372 aa).

Residue E93 is the Proton acceptor of the active site. The Radical SAM core domain occupies 99-338; that stretch reads EKDRATLCIS…VTVRKTRGDD (240 aa). C106 and C343 are joined by a disulfide. [4Fe-4S] cluster is bound by residues C113, C117, and C120. S-adenosyl-L-methionine-binding positions include 167 to 168, S199, 221 to 223, and N300; these read GE and SLH. The active-site S-methylcysteine intermediate is the C343.

Belongs to the radical SAM superfamily. RlmN family. The cofactor is [4Fe-4S] cluster.

It localises to the cytoplasm. The enzyme catalyses adenosine(2503) in 23S rRNA + 2 reduced [2Fe-2S]-[ferredoxin] + 2 S-adenosyl-L-methionine = 2-methyladenosine(2503) in 23S rRNA + 5'-deoxyadenosine + L-methionine + 2 oxidized [2Fe-2S]-[ferredoxin] + S-adenosyl-L-homocysteine. It catalyses the reaction adenosine(37) in tRNA + 2 reduced [2Fe-2S]-[ferredoxin] + 2 S-adenosyl-L-methionine = 2-methyladenosine(37) in tRNA + 5'-deoxyadenosine + L-methionine + 2 oxidized [2Fe-2S]-[ferredoxin] + S-adenosyl-L-homocysteine. Its function is as follows. Specifically methylates position 2 of adenine 2503 in 23S rRNA and position 2 of adenine 37 in tRNAs. m2A2503 modification seems to play a crucial role in the proofreading step occurring at the peptidyl transferase center and thus would serve to optimize ribosomal fidelity. The chain is Dual-specificity RNA methyltransferase RlmN from Psychromonas ingrahamii (strain DSM 17664 / CCUG 51855 / 37).